Here is a 345-residue protein sequence, read N- to C-terminus: Phosphoribosylformylglycinamidine cyclo-ligase (345 aa).

The protein belongs to the AIR synthase family.

The protein localises to the cytoplasm. The catalysed reaction is 2-formamido-N(1)-(5-O-phospho-beta-D-ribosyl)acetamidine + ATP = 5-amino-1-(5-phospho-beta-D-ribosyl)imidazole + ADP + phosphate + H(+). It functions in the pathway purine metabolism; IMP biosynthesis via de novo pathway; 5-amino-1-(5-phospho-D-ribosyl)imidazole from N(2)-formyl-N(1)-(5-phospho-D-ribosyl)glycinamide: step 2/2. This chain is Phosphoribosylformylglycinamidine cyclo-ligase, found in Shewanella amazonensis (strain ATCC BAA-1098 / SB2B).